A 97-amino-acid chain; its full sequence is uncharacterized protein (97 aa).

Positions 72–97 (TVERKRSEHTNSRKKDPSAYTWSDVK) are disordered. Basic and acidic residues predominate over residues 73–88 (VERKRSEHTNSRKKDP).

It belongs to the chlamydial CPn_0121/CT_031/TC_0300 family.

This is an uncharacterized protein from Chlamydia pneumoniae (Chlamydophila pneumoniae).